The primary structure comprises 1774 residues: U3 small nucleolar RNA-associated protein 10 (1774 aa).

Positions 1209-1228 are disordered; that stretch reads TEQGKSDGDESGSEPDNDNP. Residues 1734–1772 form an HEAT repeat; the sequence is LVPVIAELLEDDDEEVEQEVRTGLVKVVETVLGEPFDRY.

The protein belongs to the HEATR1/UTP10 family. In terms of assembly, component of the ribosomal small subunit (SSU) processome.

The protein localises to the nucleus. It localises to the nucleolus. Functionally, involved in nucleolar processing of pre-18S ribosomal RNA. Involved in ribosome biosynthesis. The protein is U3 small nucleolar RNA-associated protein 10 of Eremothecium gossypii (strain ATCC 10895 / CBS 109.51 / FGSC 9923 / NRRL Y-1056) (Yeast).